Here is a 261-residue protein sequence, read N- to C-terminus: Cytochrome c oxidase subunit 3 (261 aa).

At 1-15 (MTHQSHAYHMVKPSP) the chain is on the mitochondrial matrix side. Residues 16–34 (WPLTGALSALLMTSGLAMW) form a helical membrane-spanning segment. Over 35-40 (FHFYST) the chain is Mitochondrial intermembrane. The chain crosses the membrane as a helical span at residues 41-66 (TLLTLGLLTNTLTMYQWWRDVMREGT). At 67-72 (YQGHHT) the chain is on the mitochondrial matrix side. A helical transmembrane segment spans residues 73 to 105 (PPVQKGLRYGMILFITSEVFFFAGFFWAFYHSS). Over 106 to 128 (LAPTPQLGGHWPPTGITPLNPLE) the chain is Mitochondrial intermembrane. The helical transmembrane segment at 129–152 (VPLLNTSVLLASGVSITWAHHSLM) threads the bilayer. Residues 153-155 (ENN) are Mitochondrial matrix-facing. The helical transmembrane segment at 156 to 183 (RNQMIQALLITILLGLYFTLLQASEYFE) threads the bilayer. At 184–190 (SPFTISD) the chain is on the mitochondrial intermembrane side. The helical transmembrane segment at 191–223 (GIYGSTFFVATGFHGLHVIIGSTFLTICLIRQL) threads the bilayer. Topologically, residues 224–232 (MFHFTSKHH) are mitochondrial matrix. A helical membrane pass occupies residues 233 to 256 (FGFQAAAWYWHFVDVVWLFLYVSI). The Mitochondrial intermembrane segment spans residues 257–261 (YWWGS).

Belongs to the cytochrome c oxidase subunit 3 family. As to quaternary structure, component of the cytochrome c oxidase (complex IV, CIV), a multisubunit enzyme composed of 14 subunits. The complex is composed of a catalytic core of 3 subunits MT-CO1, MT-CO2 and MT-CO3, encoded in the mitochondrial DNA, and 11 supernumerary subunits COX4I, COX5A, COX5B, COX6A, COX6B, COX6C, COX7A, COX7B, COX7C, COX8 and NDUFA4, which are encoded in the nuclear genome. The complex exists as a monomer or a dimer and forms supercomplexes (SCs) in the inner mitochondrial membrane with NADH-ubiquinone oxidoreductase (complex I, CI) and ubiquinol-cytochrome c oxidoreductase (cytochrome b-c1 complex, complex III, CIII), resulting in different assemblies (supercomplex SCI(1)III(2)IV(1) and megacomplex MCI(2)III(2)IV(2)).

It localises to the mitochondrion inner membrane. The catalysed reaction is 4 Fe(II)-[cytochrome c] + O2 + 8 H(+)(in) = 4 Fe(III)-[cytochrome c] + 2 H2O + 4 H(+)(out). Functionally, component of the cytochrome c oxidase, the last enzyme in the mitochondrial electron transport chain which drives oxidative phosphorylation. The respiratory chain contains 3 multisubunit complexes succinate dehydrogenase (complex II, CII), ubiquinol-cytochrome c oxidoreductase (cytochrome b-c1 complex, complex III, CIII) and cytochrome c oxidase (complex IV, CIV), that cooperate to transfer electrons derived from NADH and succinate to molecular oxygen, creating an electrochemical gradient over the inner membrane that drives transmembrane transport and the ATP synthase. Cytochrome c oxidase is the component of the respiratory chain that catalyzes the reduction of oxygen to water. Electrons originating from reduced cytochrome c in the intermembrane space (IMS) are transferred via the dinuclear copper A center (CU(A)) of subunit 2 and heme A of subunit 1 to the active site in subunit 1, a binuclear center (BNC) formed by heme A3 and copper B (CU(B)). The BNC reduces molecular oxygen to 2 water molecules using 4 electrons from cytochrome c in the IMS and 4 protons from the mitochondrial matrix. The protein is Cytochrome c oxidase subunit 3 (MT-CO3) of Pan troglodytes (Chimpanzee).